The sequence spans 349 residues: GTP 3',8-cyclase (349 aa).

One can recognise a Radical SAM core domain in the interval 26 to 245; it reads GFGRAVTYLR…SSFWTLTDIP (220 aa). Arg-35 contacts GTP. Residues Cys-42 and Cys-46 each contribute to the [4Fe-4S] cluster site. Residue Tyr-48 participates in S-adenosyl-L-methionine binding. Position 49 (Cys-49) interacts with [4Fe-4S] cluster. Arg-84 is a binding site for GTP. Gly-88 lines the S-adenosyl-L-methionine pocket. Position 118 (Thr-118) interacts with GTP. Ser-142 is an S-adenosyl-L-methionine binding site. Lys-178 provides a ligand contact to GTP. Met-212 provides a ligand contact to S-adenosyl-L-methionine. Positions 275 and 278 each coordinate [4Fe-4S] cluster. 280–282 is a binding site for GTP; sequence RVR. [4Fe-4S] cluster is bound at residue Cys-292.

Belongs to the radical SAM superfamily. MoaA family. Monomer and homodimer. Requires [4Fe-4S] cluster as cofactor.

The enzyme catalyses GTP + AH2 + S-adenosyl-L-methionine = (8S)-3',8-cyclo-7,8-dihydroguanosine 5'-triphosphate + 5'-deoxyadenosine + L-methionine + A + H(+). It participates in cofactor biosynthesis; molybdopterin biosynthesis. In terms of biological role, catalyzes the cyclization of GTP to (8S)-3',8-cyclo-7,8-dihydroguanosine 5'-triphosphate. The sequence is that of GTP 3',8-cyclase from Caulobacter vibrioides (strain ATCC 19089 / CIP 103742 / CB 15) (Caulobacter crescentus).